Here is a 2450-residue protein sequence, read N- to C-terminus: Tetratricopeptide repeat protein 28 (2450 aa).

An N-acetylmethionine modification is found at Met-1. Residues Met-1–Thr-36 form a disordered region. Ser-24 is modified (phosphoserine). TPR repeat units follow at residues Phe-52–Asn-85, Ile-87–Trp-119, Pro-120–Ser-153, Phe-190–Ser-223, Gly-228–Leu-261, Cys-268–Leu-301, Ser-308–Ser-341, Ala-348–Leu-381, Ala-388–Leu-421, Met-428–Leu-461, Gly-468–Leu-501, Gly-508–Val-541, Ala-548–Leu-581, Ala-588–Leu-621, Gly-628–Leu-661, Ala-668–Leu-701, Phe-708–Val-741, Ala-748–Leu-781, Cys-788–Leu-821, Ala-828–Leu-861, Gly-871–Leu-904, Ala-911–Leu-944, Ala-951–Met-984, Ser-991–Thr-1024, Gly-1031–Met-1064, Thr-1071–Leu-1104, Ala-1111–Ile-1144, and Thr-1163–Asp-1196. The interval Ser-1362–Ser-1381 is disordered. Phosphoserine is present on residues Ser-1584 and Ser-2098. The segment at Lys-2001 to Leu-2364 is disordered. Over residues Ser-2090–Phe-2116 the composition is skewed to polar residues. Positions Ser-2124–Thr-2140 are enriched in low complexity. Residues Ser-2143–Pro-2153 are compositionally biased toward basic and acidic residues. Polar residues predominate over residues Ala-2191–Phe-2206. Ser-2216 bears the Phosphoserine mark. Polar residues predominate over residues Ala-2229–Val-2245. Composition is skewed to low complexity over residues Ser-2252–Gly-2262 and Ser-2296–Asp-2320. Ser-2365 and Ser-2370 each carry phosphoserine.

In terms of assembly, interacts with AURKB. As to expression, expressed in embryos at all stages examined. In adult tissues, detected in heart and at low levels in kidney and testis.

It localises to the cytoplasm. The protein localises to the cytoskeleton. It is found in the microtubule organizing center. Its subcellular location is the centrosome. The protein resides in the spindle. It localises to the spindle pole. The protein localises to the midbody. Functionally, during mitosis, may be involved in the condensation of spindle midzone microtubules, leading to the formation of midbody. In terms of biological role, essential for the formation and integrity of the midbody. Max play a critical role in the progress of mitosis and cytokinesis during cell cycle. The sequence is that of Tetratricopeptide repeat protein 28 (Ttc28) from Mus musculus (Mouse).